Reading from the N-terminus, the 130-residue chain is Phosphoribosyl-ATP pyrophosphatase (130 aa).

Belongs to the PRA-PH family.

It is found in the cytoplasm. It carries out the reaction 1-(5-phospho-beta-D-ribosyl)-ATP + H2O = 1-(5-phospho-beta-D-ribosyl)-5'-AMP + diphosphate + H(+). The protein operates within amino-acid biosynthesis; L-histidine biosynthesis; L-histidine from 5-phospho-alpha-D-ribose 1-diphosphate: step 2/9. The chain is Phosphoribosyl-ATP pyrophosphatase from Albidiferax ferrireducens (strain ATCC BAA-621 / DSM 15236 / T118) (Rhodoferax ferrireducens).